The chain runs to 764 residues: 5-methyltetrahydropteroyltriglutamate--homocysteine methyltransferase (764 aa).

5-methyltetrahydropteroyltri-L-glutamate contacts are provided by residues 17–20 (RELK) and K117. Residues 437-439 (IGS) and E490 contribute to the L-homocysteine site. Residues 437-439 (IGS) and E490 each bind L-methionine. 5-methyltetrahydropteroyltri-L-glutamate-binding positions include 521 to 522 (RC) and W567. Position 605 (D605) interacts with L-homocysteine. Residue D605 participates in L-methionine binding. Position 611 (E611) interacts with 5-methyltetrahydropteroyltri-L-glutamate. Residues H647, C649, and E671 each contribute to the Zn(2+) site. H701 functions as the Proton donor in the catalytic mechanism. C733 serves as a coordination point for Zn(2+).

It belongs to the vitamin-B12 independent methionine synthase family. The cofactor is Zn(2+).

It carries out the reaction 5-methyltetrahydropteroyltri-L-glutamate + L-homocysteine = tetrahydropteroyltri-L-glutamate + L-methionine. It participates in amino-acid biosynthesis; L-methionine biosynthesis via de novo pathway; L-methionine from L-homocysteine (MetE route): step 1/1. In terms of biological role, catalyzes the transfer of a methyl group from 5-methyltetrahydrofolate to homocysteine resulting in methionine formation. This is 5-methyltetrahydropteroyltriglutamate--homocysteine methyltransferase from Blochmanniella pennsylvanica (strain BPEN).